A 359-amino-acid polypeptide reads, in one-letter code: Insulin gene enhancer protein ISL-2 (359 aa).

2 consecutive LIM zinc-binding domains span residues 25-86 (AMCV…RLFG) and 87-149 (IKCA…LLER). The disordered stretch occupies residues 151 to 190 (AAGSPRSPGPLPGARGLHLPDAGSGRQPSLRTHVHKQAEK). S154 and S157 each carry phosphoserine. Residues 191–250 (TTRVRTVLNEKQLHTLRTCYAANPRPDALMKEQLVEMTGLSPRVIRVWFQNKRCKDKKKS) constitute a DNA-binding region (homeobox). Residues 272–301 (GTPLVAGSPIRHENAVQGSAVEVQTYQPPW) form an LIM-binding domain (LID) region. Phosphoserine is present on S279. Positions 326-336 (ESGSLGNSSGS) are enriched in low complexity. Positions 326-359 (ESGSLGNSSGSDVTSLSSQLPDTPNSMVPSPVET) are disordered. Polar residues predominate over residues 337–359 (DVTSLSSQLPDTPNSMVPSPVET).

Interacts with LHX4.

It is found in the nucleus. Functionally, transcriptional factor that defines subclasses of motoneurons that segregate into columns in the spinal cord and select distinct axon pathways. The chain is Insulin gene enhancer protein ISL-2 (Isl2) from Mus musculus (Mouse).